The chain runs to 39 residues: Photosystem II reaction center protein L (39 aa).

A helical membrane pass occupies residues 18-38 (SLYLGLLFVFVTGVLMSSYFF).

It belongs to the PsbL family. PSII is composed of 1 copy each of membrane proteins PsbA, PsbB, PsbC, PsbD, PsbE, PsbF, PsbH, PsbI, PsbJ, PsbK, PsbL, PsbM, PsbT, PsbX, PsbY, PsbZ, Psb30/Ycf12, peripheral proteins PsbO, CyanoQ (PsbQ), PsbU, PsbV and a large number of cofactors. It forms dimeric complexes.

The protein resides in the cellular thylakoid membrane. Its function is as follows. One of the components of the core complex of photosystem II (PSII). PSII is a light-driven water:plastoquinone oxidoreductase that uses light energy to abstract electrons from H(2)O, generating O(2) and a proton gradient subsequently used for ATP formation. It consists of a core antenna complex that captures photons, and an electron transfer chain that converts photonic excitation into a charge separation. This subunit is found at the monomer-monomer interface and is required for correct PSII assembly and/or dimerization. This Parasynechococcus marenigrum (strain WH8102) protein is Photosystem II reaction center protein L.